Here is a 395-residue protein sequence, read N- to C-terminus: XK-related protein 8 (395 aa).

Residues 1–12 (MPWSSRGALLRD) are Cytoplasmic-facing. The helical transmembrane segment at 13–33 (LVLGVLGTAAFLLDLGTDLWA) threads the bilayer. Residues 34-47 (AVQYALGGRYLWAA) are Extracellular-facing. A helical membrane pass occupies residues 48–68 (LVLALLGLASVALQLFSWLWL). The Cytoplasmic segment spans residues 69–158 (RADPAGLHGS…VLAIMLQSGR (90 aa)). A helical membrane pass occupies residues 159 to 179 (AEYYQWVGICTSFLGISWALL). At 180–200 (DYHRALRTCLPSRPLLGLGSS) the chain is on the extracellular side. A helical transmembrane segment spans residues 201–221 (VIYFLWNLLLLWPRVLAVALF). The Cytoplasmic portion of the chain corresponds to 222 to 223 (SA). Residues 224 to 244 (LFPSYVALHFLGLWLVLLLWV) form a helical membrane-spanning segment. At 245–258 (WLQGTDFMPDPSSE) the chain is on the extracellular side. Residues 259–279 (WLYQVTVATILYFSWFNVAEG) traverse the membrane as a helical segment. At 280-284 (RTRGR) the chain is on the cytoplasmic side. The chain crosses the membrane as a helical span at residues 285–305 (AIIHFAFLLSDSILLVATWVT). Residues 306 to 312 (HSSWLPS) lie on the Extracellular side of the membrane. A helical membrane pass occupies residues 313 to 333 (GIPLQLWLPVGCGCFFLGLAL). Topologically, residues 334–395 (RLVYYHWLHP…KDEAALPVKG (62 aa)) are cytoplasmic. The residue at position 362 (Ser362) is a Phosphoserine. Phosphothreonine is present on Thr375.

Belongs to the XK family. As to quaternary structure, interacts with BSG and NPTN; which act as chaperones to localize XKR8 at the cell membrane. In terms of assembly, homodimer. Undergoes proteolytic processing by caspase-3 (CASP3), leading to its activation. Post-translationally, phosphorylation at Thr-375 activates the phospholipid scramblase activity.

Its subcellular location is the cell membrane. The protein resides in the cytoplasm. It localises to the perinuclear region. The catalysed reaction is a 1,2-diacyl-sn-glycero-3-phospho-L-serine(in) = a 1,2-diacyl-sn-glycero-3-phospho-L-serine(out). Its activity is regulated as follows. Activated upon caspase cleavage to generate the XK-related protein 8, processed form. Does not act prior the onset of apoptosis. Functionally, phospholipid scramblase that promotes phosphatidylserine exposure on apoptotic cell surface. Phosphatidylserine is a specific marker only present at the surface of apoptotic cells and acts as a specific signal for engulfment. Required for the clearance of apoptotic cells, such as engulfment of apoptotic germ cells by Sertoli cells, clearance of senescent neutrophils or regulation of bipolar cell numbers in the retina. Has no effect on calcium-induced exposure of phosphatidylserine. Promotes myoblast differentiation and survival. This Pan troglodytes (Chimpanzee) protein is XK-related protein 8.